A 523-amino-acid chain; its full sequence is Bifunctional purine biosynthesis protein PurH (523 aa).

In terms of domain architecture, MGS-like spans 1–152; it reads MSTDDGRRPI…KNHPSAAVVT (152 aa).

It belongs to the PurH family.

The enzyme catalyses (6R)-10-formyltetrahydrofolate + 5-amino-1-(5-phospho-beta-D-ribosyl)imidazole-4-carboxamide = 5-formamido-1-(5-phospho-D-ribosyl)imidazole-4-carboxamide + (6S)-5,6,7,8-tetrahydrofolate. The catalysed reaction is IMP + H2O = 5-formamido-1-(5-phospho-D-ribosyl)imidazole-4-carboxamide. It participates in purine metabolism; IMP biosynthesis via de novo pathway; 5-formamido-1-(5-phospho-D-ribosyl)imidazole-4-carboxamide from 5-amino-1-(5-phospho-D-ribosyl)imidazole-4-carboxamide (10-formyl THF route): step 1/1. Its pathway is purine metabolism; IMP biosynthesis via de novo pathway; IMP from 5-formamido-1-(5-phospho-D-ribosyl)imidazole-4-carboxamide: step 1/1. The polypeptide is Bifunctional purine biosynthesis protein PurH (Mycobacterium bovis (strain BCG / Pasteur 1173P2)).